Consider the following 426-residue polypeptide: GTPase Obg (426 aa).

The Obg domain maps to 1 to 158 (MFVDQVSVYV…RNIKVELKLI (158 aa)). Disordered regions lie at residues 66-86 (GKRG…DPLV) and 119-146 (GGRG…GEPG). One can recognise an OBG-type G domain in the interval 159 to 329 (ADVGLVGFPS…LLFAIADKLE (171 aa)). Residues 165–172 (GFPSVGKS), 190–194 (FTTLS), 212–215 (DLPG), 282–285 (NKMD), and 310–312 (SAL) contribute to the GTP site. Mg(2+)-binding residues include serine 172 and threonine 192. The region spanning 348–426 (RYQKEEDPFH…LLEYEFEFIE (79 aa)) is the OCT domain.

Belongs to the TRAFAC class OBG-HflX-like GTPase superfamily. OBG GTPase family. As to quaternary structure, monomer. The cofactor is Mg(2+).

It is found in the cytoplasm. Its function is as follows. An essential GTPase which binds GTP, GDP and possibly (p)ppGpp with moderate affinity, with high nucleotide exchange rates and a fairly low GTP hydrolysis rate. Plays a role in control of the cell cycle, stress response, ribosome biogenesis and in those bacteria that undergo differentiation, in morphogenesis control. The sequence is that of GTPase Obg from Oceanobacillus iheyensis (strain DSM 14371 / CIP 107618 / JCM 11309 / KCTC 3954 / HTE831).